Here is a 249-residue protein sequence, read N- to C-terminus: tRNA pseudouridine synthase A (249 aa).

Aspartate 54 acts as the Nucleophile in catalysis. Tyrosine 112 contributes to the substrate binding site.

Belongs to the tRNA pseudouridine synthase TruA family. Homodimer.

The catalysed reaction is uridine(38/39/40) in tRNA = pseudouridine(38/39/40) in tRNA. Functionally, formation of pseudouridine at positions 38, 39 and 40 in the anticodon stem and loop of transfer RNAs. In Latilactobacillus sakei subsp. sakei (strain 23K) (Lactobacillus sakei subsp. sakei), this protein is tRNA pseudouridine synthase A.